Consider the following 186-residue polypeptide: Elongation factor P (186 aa).

Belongs to the elongation factor P family.

Its subcellular location is the cytoplasm. It participates in protein biosynthesis; polypeptide chain elongation. Functionally, involved in peptide bond synthesis. Stimulates efficient translation and peptide-bond synthesis on native or reconstituted 70S ribosomes in vitro. Probably functions indirectly by altering the affinity of the ribosome for aminoacyl-tRNA, thus increasing their reactivity as acceptors for peptidyl transferase. This is Elongation factor P from Thiobacillus denitrificans (strain ATCC 25259 / T1).